We begin with the raw amino-acid sequence, 61 residues long: Putative antitoxin RelB2 (61 aa).

Functionally, antitoxin component of a type II toxin-antitoxin (TA) system. Its cognate toxin is RelE2 (Potential). The sequence is that of Putative antitoxin RelB2 (relB2) from Methanocaldococcus jannaschii (strain ATCC 43067 / DSM 2661 / JAL-1 / JCM 10045 / NBRC 100440) (Methanococcus jannaschii).